The primary structure comprises 599 residues: Sulfite reductase [NADPH] flavoprotein alpha-component (599 aa).

One can recognise a Flavodoxin-like domain in the interval 64 to 202; that stretch reads ITIISASQTG…AASEWRARVV (139 aa). Residues 70-75, 117-120, and 153-162 each bind FMN; these read SQTGNA, STQG, and LGDSSYEFFC. The FAD-binding FR-type domain occupies 234-448; it reads DSPLVASLSV…IEHNDNFRLP (215 aa). FAD is bound by residues T322, A356, 386–389, 404–406, Y410, and 419–422; these read RLYS, TVG, and GGAS. Residues 519–520, 525–529, and D561 contribute to the NADP(+) site; these read SR and KVYVQ. Y599 is a binding site for FAD.

The protein belongs to the NADPH-dependent sulphite reductase flavoprotein subunit CysJ family. It in the N-terminal section; belongs to the flavodoxin family. In the C-terminal section; belongs to the flavoprotein pyridine nucleotide cytochrome reductase family. Alpha(8)-beta(8). The alpha component is a flavoprotein, the beta component is a hemoprotein. FAD serves as cofactor. It depends on FMN as a cofactor.

It catalyses the reaction hydrogen sulfide + 3 NADP(+) + 3 H2O = sulfite + 3 NADPH + 4 H(+). It functions in the pathway sulfur metabolism; hydrogen sulfide biosynthesis; hydrogen sulfide from sulfite (NADPH route): step 1/1. In terms of biological role, component of the sulfite reductase complex that catalyzes the 6-electron reduction of sulfite to sulfide. This is one of several activities required for the biosynthesis of L-cysteine from sulfate. The flavoprotein component catalyzes the electron flow from NADPH -&gt; FAD -&gt; FMN to the hemoprotein component. The polypeptide is Sulfite reductase [NADPH] flavoprotein alpha-component (Escherichia coli O9:H4 (strain HS)).